The following is a 350-amino-acid chain: DNA polymerase IV (350 aa).

A UmuC domain is found at 6 to 187 (IIHIDMDAFY…LPVEKIFGIG (182 aa)). Residues Asp-10 and Asp-105 each coordinate Mg(2+). Glu-106 is a catalytic residue.

It belongs to the DNA polymerase type-Y family. Monomer. Requires Mg(2+) as cofactor.

It is found in the cytoplasm. The enzyme catalyses DNA(n) + a 2'-deoxyribonucleoside 5'-triphosphate = DNA(n+1) + diphosphate. Its function is as follows. Poorly processive, error-prone DNA polymerase involved in untargeted mutagenesis. Copies undamaged DNA at stalled replication forks, which arise in vivo from mismatched or misaligned primer ends. These misaligned primers can be extended by PolIV. Exhibits no 3'-5' exonuclease (proofreading) activity. May be involved in translesional synthesis, in conjunction with the beta clamp from PolIII. This chain is DNA polymerase IV, found in Protochlamydia amoebophila (strain UWE25).